A 316-amino-acid polypeptide reads, in one-letter code: Beta-ketoacyl-[acyl-carrier-protein] synthase III 1 (316 aa).

Residues cysteine 112 and histidine 243 contribute to the active site. Residues glutamine 244 to arginine 248 are ACP-binding. Asparagine 273 is an active-site residue.

It belongs to the thiolase-like superfamily. FabH family. As to quaternary structure, homodimer.

It is found in the cytoplasm. It carries out the reaction malonyl-[ACP] + acetyl-CoA + H(+) = 3-oxobutanoyl-[ACP] + CO2 + CoA. Its pathway is lipid metabolism; fatty acid biosynthesis. In terms of biological role, catalyzes the condensation reaction of fatty acid synthesis by the addition to an acyl acceptor of two carbons from malonyl-ACP. Catalyzes the first condensation reaction which initiates fatty acid synthesis and may therefore play a role in governing the total rate of fatty acid production. Possesses both acetoacetyl-ACP synthase and acetyl transacylase activities. Its substrate specificity determines the biosynthesis of branched-chain and/or straight-chain of fatty acids. In Vibrio vulnificus (strain CMCP6), this protein is Beta-ketoacyl-[acyl-carrier-protein] synthase III 1.